The chain runs to 132 residues: Small ribosomal subunit protein uS8 (132 aa).

This sequence belongs to the universal ribosomal protein uS8 family. In terms of assembly, part of the 30S ribosomal subunit. Contacts proteins S5 and S12.

One of the primary rRNA binding proteins, it binds directly to 16S rRNA central domain where it helps coordinate assembly of the platform of the 30S subunit. This chain is Small ribosomal subunit protein uS8, found in Mycoplasmopsis pulmonis (strain UAB CTIP) (Mycoplasma pulmonis).